Here is a 453-residue protein sequence, read N- to C-terminus: Bifunctional protein GlmU (453 aa).

The pyrophosphorylase stretch occupies residues 1–226 (MSFSAVILAA…PIEVEGVNNR (226 aa)). UDP-N-acetyl-alpha-D-glucosamine-binding positions include 8–11 (LAAG), lysine 22, glutamine 73, 78–79 (GT), 100–102 (YGD), glycine 137, glutamate 151, asparagine 166, and asparagine 224. Residue aspartate 102 coordinates Mg(2+). Residue asparagine 224 coordinates Mg(2+). The tract at residues 227 to 247 (IQLARLERAYQAMQAERLLEQ) is linker. The N-acetyltransferase stretch occupies residues 248–453 (GVMLRDPSRF…KGWKRPVKQK (206 aa)). UDP-N-acetyl-alpha-D-glucosamine-binding residues include arginine 330 and lysine 348. Histidine 360 acts as the Proton acceptor in catalysis. UDP-N-acetyl-alpha-D-glucosamine is bound by residues tyrosine 363 and asparagine 374. Acetyl-CoA contacts are provided by residues alanine 377, 383 to 384 (NY), serine 402, alanine 420, and arginine 437.

The protein in the N-terminal section; belongs to the N-acetylglucosamine-1-phosphate uridyltransferase family. This sequence in the C-terminal section; belongs to the transferase hexapeptide repeat family. In terms of assembly, homotrimer. The cofactor is Mg(2+).

It is found in the cytoplasm. It catalyses the reaction alpha-D-glucosamine 1-phosphate + acetyl-CoA = N-acetyl-alpha-D-glucosamine 1-phosphate + CoA + H(+). The enzyme catalyses N-acetyl-alpha-D-glucosamine 1-phosphate + UTP + H(+) = UDP-N-acetyl-alpha-D-glucosamine + diphosphate. The protein operates within nucleotide-sugar biosynthesis; UDP-N-acetyl-alpha-D-glucosamine biosynthesis; N-acetyl-alpha-D-glucosamine 1-phosphate from alpha-D-glucosamine 6-phosphate (route II): step 2/2. Its pathway is nucleotide-sugar biosynthesis; UDP-N-acetyl-alpha-D-glucosamine biosynthesis; UDP-N-acetyl-alpha-D-glucosamine from N-acetyl-alpha-D-glucosamine 1-phosphate: step 1/1. It participates in bacterial outer membrane biogenesis; LPS lipid A biosynthesis. Catalyzes the last two sequential reactions in the de novo biosynthetic pathway for UDP-N-acetylglucosamine (UDP-GlcNAc). The C-terminal domain catalyzes the transfer of acetyl group from acetyl coenzyme A to glucosamine-1-phosphate (GlcN-1-P) to produce N-acetylglucosamine-1-phosphate (GlcNAc-1-P), which is converted into UDP-GlcNAc by the transfer of uridine 5-monophosphate (from uridine 5-triphosphate), a reaction catalyzed by the N-terminal domain. This Photobacterium profundum (strain SS9) protein is Bifunctional protein GlmU.